The primary structure comprises 353 residues: uncharacterized protein (353 aa).

Residues 1 to 24 form the signal peptide; that stretch reads MRVVKRIAVACYLGITIFSGIAFG.

This sequence belongs to the chlamydial CPn_1058/CT_355/TC_0634 family.

This is an uncharacterized protein from Chlamydia muridarum (strain MoPn / Nigg).